Here is a 394-residue protein sequence, read N- to C-terminus: Actin-related protein 2-A (394 aa).

ATP is bound by residues 160 to 162, 214 to 218, and 305 to 310; these read GDG, RMMKE, and GGSTMY.

It belongs to the actin family. ARP2 subfamily. Component of the Arp2/3 complex composed of actr2/arp2, actr3/arp3, arpc1b, arpc2, arpc3, arpc4 and arpc5.

Its subcellular location is the cytoplasm. The protein localises to the cytoskeleton. The protein resides in the cell projection. It is found in the nucleus. Its function is as follows. ATP-binding component of the Arp2/3 complex, a multiprotein complex that mediates actin polymerization upon stimulation by nucleation-promoting factor (NPF). The Arp2/3 complex mediates the formation of branched actin networks in the cytoplasm, providing the force for cell motility. Seems to contact the pointed end of the daughter actin filament. In addition to its role in the cytoplasmic cytoskeleton, the Arp2/3 complex also promotes actin polymerization in the nucleus, thereby regulating gene transcription and repair of damaged DNA. The Arp2/3 complex promotes homologous recombination (HR) repair in response to DNA damage by promoting nuclear actin polymerization, leading to drive motility of double-strand breaks (DSBs). In Danio rerio (Zebrafish), this protein is Actin-related protein 2-A (actr2a).